We begin with the raw amino-acid sequence, 531 residues long: Bifunctional aspartate aminotransferase and L-aspartate beta-decarboxylase (531 aa).

Residues glycine 114 and asparagine 255 each contribute to the L-aspartate site. An N6-(pyridoxal phosphate)lysine modification is found at lysine 314. Arginine 496 serves as a coordination point for L-aspartate.

The protein belongs to the class-I pyridoxal-phosphate-dependent aminotransferase family. As to quaternary structure, homododecamer. Requires pyridoxal 5'-phosphate as cofactor.

The catalysed reaction is L-aspartate + H(+) = L-alanine + CO2. The enzyme catalyses L-aspartate + 2-oxoglutarate = oxaloacetate + L-glutamate. Its activity is regulated as follows. Inhibited by 10 mM Co(2+), Mn(2+) and Ni(2+), and by 1 mM Cu(2+) and Hg(2+). Functionally, bifunctional enzyme that has both L-aspartate decarboxylase and transaminase activity. Has high activity with L-aspartate, and much lower activity with D-aspartate, L-lysine and L-glutamine. In Pseudomonas sp, this protein is Bifunctional aspartate aminotransferase and L-aspartate beta-decarboxylase.